The following is a 199-amino-acid chain: Probable chemoreceptor glutamine deamidase CheD (199 aa).

Belongs to the CheD family.

The catalysed reaction is L-glutaminyl-[protein] + H2O = L-glutamyl-[protein] + NH4(+). Its function is as follows. Probably deamidates glutamine residues to glutamate on methyl-accepting chemotaxis receptors (MCPs), playing an important role in chemotaxis. The chain is Probable chemoreceptor glutamine deamidase CheD from Cereibacter sphaeroides (strain ATCC 17023 / DSM 158 / JCM 6121 / CCUG 31486 / LMG 2827 / NBRC 12203 / NCIMB 8253 / ATH 2.4.1.) (Rhodobacter sphaeroides).